Here is a 563-residue protein sequence, read N- to C-terminus: 3-oxosteroid 1-dehydrogenase (563 aa).

7–36 (DVVVVGSGAAGMVAALVAAHRGLSTVVVEK) serves as a coordination point for FAD.

It belongs to the FAD-dependent oxidoreductase 2 family. 3-oxosteroid dehydrogenase subfamily. It depends on FAD as a cofactor.

The enzyme catalyses a 3-oxosteroid + A = a 3-oxo-Delta(1)-steroid + AH2. The catalysed reaction is a 3-oxo-Delta(4)-steroid + A = a 3-oxo-Delta(1,4)-steroid + AH2. It carries out the reaction 3-oxochol-4-en-22-oyl-CoA + NAD(+) = 3-oxochola-1,4-dien-22-oyl-CoA + NADH + H(+). Involved in the degradation of cholesterol. Catalyzes the elimination of the C-1 and C-2 hydrogen atoms of the A-ring from the polycyclic ring structure of 3-ketosteroids. Has a clear preference for 3-ketosteroids with a saturated A-ring, displaying highest activity on 5alpha-AD (5alpha-androstane-3,17-dione) and 5alpha-T (5alpha-testosterone, also known as 17beta-hydroxy-5alpha-androstane-3-one). Is also involved in the formation of 3-keto-1,4-diene-steroid from 3-keto-4-ene-steroid. Catalyzes the conversion of 3-oxo-23,24-bisnorchol-4-en-22-oyl-coenzyme A thioester (4-BNC-CoA) to 3-oxo-23,24-bisnorchola-1,4-dien-22-oyl-coenzyme A thioester (1,4-BNC-CoA). The protein is 3-oxosteroid 1-dehydrogenase (kstD) of Mycobacterium tuberculosis (strain ATCC 25618 / H37Rv).